Reading from the N-terminus, the 118-residue chain is Actin depolymerizing factor ADF (118 aa).

The ADF-H domain maps to 4–118 (GMGVDENCVA…HEMGDLAPLA (115 aa)).

It belongs to the actin-binding proteins ADF family. As to quaternary structure, interacts with ACT1 (G-actin); the interaction results in inhibition of actin polymerization. Interacts with DPA; the interaction enhances ADF activity in disassembly of filamentous actin and inhibition of actin polymerization.

It is found in the cytoplasm. Its function is as follows. Inhibits actin polymerization. Promotes actin depolymerization. Strongly sequesters actin monomers (G-actin). Weakly severs actin filaments (F-actin). The protein is Actin depolymerizing factor ADF of Toxoplasma gondii.